A 343-amino-acid chain; its full sequence is F-box/kelch-repeat protein At3g08810 (343 aa).

Basic residues predominate over residues 1–15 (MSYPERKRKRSRWSK). The disordered stretch occupies residues 1–25 (MSYPERKRKRSRWSKPHSTQNPSPS). The F-box domain maps to 20-66 (QNPSPSLPDDVLLSIFARVSRLYYPTLSHVSESFRSLLASPELYKAR). Kelch repeat units lie at residues 134 to 181 (DIYN…VRDG), 183 to 224 (QGGH…LPDS), and 225 to 271 (YCVI…VILA).

In Arabidopsis thaliana (Mouse-ear cress), this protein is F-box/kelch-repeat protein At3g08810.